Reading from the N-terminus, the 363-residue chain is Chorismate synthase (363 aa).

NADP(+)-binding residues include R48 and R54. FMN contacts are provided by residues 125–127 (RSS), 237–238 (NA), G277, 292–296 (KPTSS), and R318.

It belongs to the chorismate synthase family. As to quaternary structure, homotetramer. FMNH2 serves as cofactor.

The catalysed reaction is 5-O-(1-carboxyvinyl)-3-phosphoshikimate = chorismate + phosphate. The protein operates within metabolic intermediate biosynthesis; chorismate biosynthesis; chorismate from D-erythrose 4-phosphate and phosphoenolpyruvate: step 7/7. Functionally, catalyzes the anti-1,4-elimination of the C-3 phosphate and the C-6 proR hydrogen from 5-enolpyruvylshikimate-3-phosphate (EPSP) to yield chorismate, which is the branch point compound that serves as the starting substrate for the three terminal pathways of aromatic amino acid biosynthesis. This reaction introduces a second double bond into the aromatic ring system. The chain is Chorismate synthase from Pseudomonas putida (strain GB-1).